The chain runs to 1064 residues: Lysine-specific demethylase 4A (1064 aa).

Position 2 is an N-acetylalanine (Ala2). The JmjN domain maps to 14–56; it reads IMTFYPTMEEFRNFSRYIAYIESQGAHRAGLAKVVPPKEWKPR. Tyr132 is a 2-oxoglutarate binding site. Residues 142–308 form the JmjC domain; that stretch reads EKHVDEWNIG…YGKQAVLCSC (167 aa). The Fe cation site is built by His188 and Glu190. The 2-oxoglutarate site is built by Asn198 and Lys206. Residues Cys234 and His240 each coordinate Zn(2+). Lys241 provides a ligand contact to 2-oxoglutarate. His276 is a binding site for Fe cation. Zn(2+) is bound by residues Cys306 and Cys308. 3 disordered regions span residues 358 to 384, 501 to 537, and 616 to 642; these read ELPPRAGNEEECPEDDMEGVEDGEEGD, FSGSKKKSSSSLGSGSSRDSVSSDSETSEPLSCRAQG, and SDDETSEQLTPEEEAEETEAWAKPLSQ. Acidic residues predominate over residues 366 to 382; it reads EEECPEDDMEGVEDGEE. A compositionally biased stretch (low complexity) spans 509–532; it reads SSSLGSGSSRDSVSSDSETSEPLS. Ser523 carries the phosphoserine modification. The segment at 597-638 is interaction with NCOR1; that stretch reads RQPLSKLPRHHPLVLQECVSDDETSEQLTPEEEAEETEAWAK. Residues 616–634 are compositionally biased toward acidic residues; sequence SDDETSEQLTPEEEAEETE. The PHD-type 1 zinc finger occupies 709 to 767; that stretch reads MCFTSTGCGTDINLSTPYLEEDGTSILVSCKKCSVRVHASCYGVPPAKASEDWMCSRCS. The C2HC pre-PHD-type zinc-finger motif lies at 772–805; the sequence is EEDCCLCSLRGGALQRANDDRWVHVSCAVAILEA. The segment at 828 to 885 adopts a PHD-type 2 zinc-finger fold; it reads LKCIFCKKRRKRTAGCCVQCSHGRCPTAFHVSCAQAAGVMMQPDDWPFVVFITCFRHK. 2 consecutive Tudor domains span residues 897 to 954 and 955 to 1011; these read QSIT…CLQF and GPPA…EELP.

It belongs to the JHDM3 histone demethylase family. In terms of assembly, interacts with histone deacetylase proteins HDAC1, HDAC2 and HDAC3. Interacts with RB and NCOR1. Interacts with VRK1. Fe(2+) serves as cofactor. Ubiquitinated by RNF8 and RNF168, leading to its degradation. Degradation promotes accessibility of H4K20me2 mark for DNA repair protein TP53BP1, which is then recruited. Also ubiquitinated by the SCF(FBXO22) complex; leading to proteasomal degradation.

It localises to the nucleus. It carries out the reaction N(6),N(6),N(6)-trimethyl-L-lysyl(9)-[histone H3] + 2 2-oxoglutarate + 2 O2 = N(6)-methyl-L-lysyl(9)-[histone H3] + 2 formaldehyde + 2 succinate + 2 CO2. The enzyme catalyses N(6),N(6),N(6)-trimethyl-L-lysyl(36)-[histone H3] + 2 2-oxoglutarate + 2 O2 = N(6)-methyl-L-lysyl(36)-[histone H3] + 2 formaldehyde + 2 succinate + 2 CO2. Histone demethylase that specifically demethylates 'Lys-9' and 'Lys-36' residues of histone H3, thereby playing a central role in histone code. Does not demethylate histone H3 'Lys-4', H3 'Lys-27' nor H4 'Lys-20'. Demethylates trimethylated H3 'Lys-9' and H3 'Lys-36' residue, while it has no activity on mono- and dimethylated residues. Demethylation of Lys residue generates formaldehyde and succinate. Participates in transcriptional repression of ASCL2 and E2F-responsive promoters via the recruitment of histone deacetylases and NCOR1, respectively. The polypeptide is Lysine-specific demethylase 4A (KDM4A) (Pongo abelii (Sumatran orangutan)).